The sequence spans 255 residues: 5'-nucleotidase SurE (255 aa).

A divalent metal cation-binding residues include D8, D9, S40, and N93.

Belongs to the SurE nucleotidase family. Requires a divalent metal cation as cofactor.

The protein localises to the cytoplasm. The enzyme catalyses a ribonucleoside 5'-phosphate + H2O = a ribonucleoside + phosphate. In terms of biological role, nucleotidase that shows phosphatase activity on nucleoside 5'-monophosphates. This chain is 5'-nucleotidase SurE, found in Rhodopseudomonas palustris (strain ATCC BAA-98 / CGA009).